We begin with the raw amino-acid sequence, 547 residues long: Ganoderic acid synthetase CYP5150L8 (547 aa).

A helical transmembrane segment spans residues 2–22 (PDSSLVLVAIAGAAYIFWLVF). Cysteine 487 lines the heme pocket.

It belongs to the cytochrome P450 family. It depends on heme as a cofactor.

It localises to the membrane. It catalyses the reaction lanosterol + reduced [NADPH--hemoprotein reductase] + O2 = 26-hydroxylanosterol + oxidized [NADPH--hemoprotein reductase] + H2O + H(+). It carries out the reaction 26-hydroxylanosterol + reduced [NADPH--hemoprotein reductase] + O2 = 26-oxolanosterol + oxidized [NADPH--hemoprotein reductase] + 2 H2O + H(+). The enzyme catalyses 26-oxolanosterol + reduced [NADPH--hemoprotein reductase] + O2 = 3beta-hydroxy-lanosta-8, 24-dien-26-oate + oxidized [NADPH--hemoprotein reductase] + H2O + 2 H(+). Its pathway is secondary metabolite biosynthesis; terpenoid biosynthesis. Functionally, cytochrome P450 monooxygenase that is involved in the biosynthesis of ganoderic acids (GA), a group of highly oxygenated lanostane-type triterpenoids which well recognized as a main group of unique bioactive compounds in the medicinal mushroom Ganoderma lucidum. CYP5150L8 alone is able to catalyze the three-step oxidations at C-26 from lanosterol to 3-hydroxy-lanosta-8,24-dien-26-oic acid (also called ganoderic acid Z or HLDOA). The methyl group of lanosterol at C-26 is first oxidized into hydroxyl group to form 3-hydroxy-lanosta-8,24-dien-26-ol (HLDO). The hydroxyl group at C-26 of HLDO is further converted into a formyl group to form 3-hydroxy-lanosta-8,24-dien-26-al (HLDA). Finally, the formyl group is oxidized into a carboxyl group to produce 3-hydroxy-lanosta-8,24-dien-26-oic acid (HLDOA). The protein is Ganoderic acid synthetase CYP5150L8 of Ganoderma lucidum (Ling zhi medicinal fungus).